The primary structure comprises 330 residues: ADP-L-glycero-D-manno-heptose-6-epimerase (330 aa).

NADP(+)-binding positions include 11–12 (FI), 32–33 (DN), Lys39, Lys54, 75–79 (EGACS), and Asn92. Residue Tyr139 is the Proton acceptor of the active site. NADP(+) is bound at residue Lys143. Position 168 (Asn168) interacts with substrate. NADP(+) is bound by residues Val169 and Lys177. The Proton acceptor role is filled by Lys177. Residues Arg179, His186, 200-203 (FGEY), Arg213, and Tyr292 each bind substrate.

This sequence belongs to the NAD(P)-dependent epimerase/dehydratase family. HldD subfamily. As to quaternary structure, homopentamer. The cofactor is NADP(+).

The enzyme catalyses ADP-D-glycero-beta-D-manno-heptose = ADP-L-glycero-beta-D-manno-heptose. The protein operates within nucleotide-sugar biosynthesis; ADP-L-glycero-beta-D-manno-heptose biosynthesis; ADP-L-glycero-beta-D-manno-heptose from D-glycero-beta-D-manno-heptose 7-phosphate: step 4/4. Its function is as follows. Catalyzes the interconversion between ADP-D-glycero-beta-D-manno-heptose and ADP-L-glycero-beta-D-manno-heptose via an epimerization at carbon 6 of the heptose. The sequence is that of ADP-L-glycero-D-manno-heptose-6-epimerase from Paraburkholderia phymatum (strain DSM 17167 / CIP 108236 / LMG 21445 / STM815) (Burkholderia phymatum).